A 449-amino-acid polypeptide reads, in one-letter code: Allantoinase (449 aa).

Zn(2+) is bound by residues histidine 59, histidine 61, lysine 146, histidine 182, histidine 238, and aspartate 311. N6-carboxylysine is present on lysine 146.

It belongs to the metallo-dependent hydrolases superfamily. Allantoinase family. As to quaternary structure, homotetramer. Zn(2+) serves as cofactor. In terms of processing, carboxylation allows a single lysine to coordinate two zinc ions.

The catalysed reaction is (S)-allantoin + H2O = allantoate + H(+). It functions in the pathway nitrogen metabolism; (S)-allantoin degradation; allantoate from (S)-allantoin: step 1/1. Catalyzes the conversion of allantoin (5-ureidohydantoin) to allantoic acid by hydrolytic cleavage of the five-member hydantoin ring. This Deinococcus geothermalis (strain DSM 11300 / CIP 105573 / AG-3a) protein is Allantoinase.